We begin with the raw amino-acid sequence, 862 residues long: Leucine--tRNA ligase (862 aa).

The 'HIGH' region motif lies at Pro51–His61. The 'KMSKS' region signature appears at Lys624 to Ser628. Residue Lys627 coordinates ATP.

It belongs to the class-I aminoacyl-tRNA synthetase family.

Its subcellular location is the cytoplasm. It catalyses the reaction tRNA(Leu) + L-leucine + ATP = L-leucyl-tRNA(Leu) + AMP + diphosphate. In Prochlorococcus marinus (strain NATL2A), this protein is Leucine--tRNA ligase.